Consider the following 82-residue polypeptide: Immediate early response 3-interacting protein 1 (82 aa).

The next 2 helical transmembrane spans lie at 2 to 22 and 62 to 82; these read AFTL…IAVL and VMRV…LLFG.

Belongs to the YOS1 family.

The protein resides in the endoplasmic reticulum membrane. Regulator of endoplasmic reticulum secretion that acts as a key determinant of brain size. Required for secretion of extracellular matrix proteins. Required for correct brain development by depositing sufficient extracellular matrix proteins for tissue integrity and the proliferation of neural progenitors. Acts as a regulator of the unfolded protein response (UPR). In Mus musculus (Mouse), this protein is Immediate early response 3-interacting protein 1.